Here is a 579-residue protein sequence, read N- to C-terminus: Transcription factor COE2 (579 aa).

The interaction with DNA stretch occupies residues 63–66 (RKSN). A C5-type zinc finger spans residues 149–168 (CRVLLTHEVMCSRCCEKKSC). Interaction with DNA regions lie at residues 195-202 (NCLKTAGN) and 234-237 (NNSK). The region spanning 260–343 (PCIKAISPSE…KGAPGRFIYT (84 aa)) is the IPT/TIG domain. Disordered stretches follow at residues 442–482 (GVSI…YGSN), 514–533 (AIMPSSPPGSSSSSSLLPFS), and 549–579 (LRPQGFPHHPSAKTSGGTSFRAMTGLVVPPM). The span at 449-459 (GQTSGQGYTRN) shows a compositional bias: polar residues. Low complexity-rich tracts occupy residues 460–472 (SSSLSPRGYPSSS) and 521–533 (PGSSSSSSLLPFS).

Belongs to the COE family.

The protein localises to the nucleus. This chain is Transcription factor COE2 (coe2), found in Danio rerio (Zebrafish).